We begin with the raw amino-acid sequence, 290 residues long: Bifunctional protein FolD 1 (290 aa).

NADP(+) is bound by residues 164-166 (GRS), Ile-193, and Ile-236.

It belongs to the tetrahydrofolate dehydrogenase/cyclohydrolase family. As to quaternary structure, homodimer.

The catalysed reaction is (6R)-5,10-methylene-5,6,7,8-tetrahydrofolate + NADP(+) = (6R)-5,10-methenyltetrahydrofolate + NADPH. It carries out the reaction (6R)-5,10-methenyltetrahydrofolate + H2O = (6R)-10-formyltetrahydrofolate + H(+). It functions in the pathway one-carbon metabolism; tetrahydrofolate interconversion. In terms of biological role, catalyzes the oxidation of 5,10-methylenetetrahydrofolate to 5,10-methenyltetrahydrofolate and then the hydrolysis of 5,10-methenyltetrahydrofolate to 10-formyltetrahydrofolate. This chain is Bifunctional protein FolD 1, found in Geobacter metallireducens (strain ATCC 53774 / DSM 7210 / GS-15).